Consider the following 176-residue polypeptide: Cytochrome c oxidase subunit 4 isoform 2, mitochondrial (176 aa).

The N-terminal 28 residues, 1-28 (MLRLTAGRVRSLLAGRATAAFSTSSARM), are a transit peptide targeting the mitochondrion. The Mitochondrial matrix portion of the chain corresponds to 29-106 (ASHDLEVAES…TYSEMKQPSS (78 aa)). Residues 107–132 (EWKTVFGGIFIFLGFTGLVVWWQALY) form a helical membrane-spanning segment. Over 133-176 (VYPPRPRTFDDEWKAKQLKRMLDMRVNPIEGFSAKWDYEKGQWK) the chain is Mitochondrial intermembrane.

This sequence belongs to the cytochrome c oxidase IV family. In terms of assembly, component of the cytochrome c oxidase (complex IV, CIV), a multisubunit enzyme composed of 14 subunits. The complex is composed of a catalytic core of 3 subunits MT-CO1, MT-CO2 and MT-CO3, encoded in the mitochondrial DNA, and 11 supernumerary subunits COX4I, COX5A, COX5B, COX6A, COX6B, COX6C, COX7A, COX7B, COX7C, COX8 and NDUFA4, which are encoded in the nuclear genome. The complex exists as a monomer or a dimer and forms supercomplexes (SCs) in the inner mitochondrial membrane with NADH-ubiquinone oxidoreductase (complex I, CI) and ubiquinol-cytochrome c oxidoreductase (cytochrome b-c1 complex, complex III, CIII), resulting in different assemblies (supercomplex SCI(1)III(2)IV(1) and megacomplex MCI(2)III(2)IV(2)).

The protein resides in the mitochondrion inner membrane. It functions in the pathway energy metabolism; oxidative phosphorylation. Functionally, component of the cytochrome c oxidase, the last enzyme in the mitochondrial electron transport chain which drives oxidative phosphorylation. The respiratory chain contains 3 multisubunit complexes succinate dehydrogenase (complex II, CII), ubiquinol-cytochrome c oxidoreductase (cytochrome b-c1 complex, complex III, CIII) and cytochrome c oxidase (complex IV, CIV), that cooperate to transfer electrons derived from NADH and succinate to molecular oxygen, creating an electrochemical gradient over the inner membrane that drives transmembrane transport and the ATP synthase. Cytochrome c oxidase is the component of the respiratory chain that catalyzes the reduction of oxygen to water. Electrons originating from reduced cytochrome c in the intermembrane space (IMS) are transferred via the dinuclear copper A center (CU(A)) of subunit 2 and heme A of subunit 1 to the active site in subunit 1, a binuclear center (BNC) formed by heme A3 and copper B (CU(B)). The BNC reduces molecular oxygen to 2 water molecules using 4 electrons from cytochrome c in the IMS and 4 protons from the mitochondrial matrix. The chain is Cytochrome c oxidase subunit 4 isoform 2, mitochondrial from Thunnus obesus (Bigeye tuna).